Consider the following 341-residue polypeptide: Sphingolipid long chain base-responsive protein LSP1 (341 aa).

The span at M1 to R11 shows a compositional bias: polar residues. Residues M1 to F32 form a disordered region. Phosphothreonine is present on T233. Acidic residues-rich tracts occupy residues Y282 to E294 and V305 to H323. The tract at residues Y282–I341 is disordered. Residues S330–I341 show a composition bias toward polar residues.

Phosphorylated by PKH1 and PKH2. Phosphorylation is stimulated by sphingolipid long chain bases (LCBs). In terms of processing, N-glycosylated.

The protein resides in the cytoplasm. It localises to the cell cortex. In terms of biological role, together with PIL1, main component of eisosomes, structures at the cell periphery underneath the plasma membrane that mark the site of endocytosis. Negative regulator of cell wall integrity (CWI) in unstressed cells, probably by inhibiting protein kinase PKH1/PHK2 activity and regulating their downstream CWI pathways PKC1-MAP kinase pathway and protein kinase YPK1 pathway. Activity may be regulated by the transient increase of sphingolipid long chain bases (LCBs) during heat stress. The chain is Sphingolipid long chain base-responsive protein LSP1 (LSP1) from Saccharomyces cerevisiae (strain ATCC 204508 / S288c) (Baker's yeast).